The chain runs to 340 residues: GTPase Obg (340 aa).

The 158-residue stretch at 1–158 (MSFIDEAKIY…KHIILKLKII (158 aa)) folds into the Obg domain. The OBG-type G domain occupies 159-325 (SDVGIIGLPN…LSTLIKQIHK (167 aa)). GTP-binding positions include 165 to 172 (GLPNAGKS), 190 to 194 (FTTLE), 211 to 214 (DIPG), 278 to 281 (NKSD), and 306 to 308 (SSI). Ser-172 and Thr-192 together coordinate Mg(2+).

The protein belongs to the TRAFAC class OBG-HflX-like GTPase superfamily. OBG GTPase family. In terms of assembly, monomer. It depends on Mg(2+) as a cofactor.

It localises to the cytoplasm. Its function is as follows. An essential GTPase which binds GTP, GDP and possibly (p)ppGpp with moderate affinity, with high nucleotide exchange rates and a fairly low GTP hydrolysis rate. Plays a role in control of the cell cycle, stress response, ribosome biogenesis and in those bacteria that undergo differentiation, in morphogenesis control. This chain is GTPase Obg, found in Ehrlichia canis (strain Jake).